Consider the following 66-residue polypeptide: Movement protein TGBp3 (66 aa).

The Lumenal portion of the chain corresponds to 1-2; sequence MD. A helical membrane pass occupies residues 3–23; that stretch reads FTTLVIIGVYLLVFIVYFAKI. Residues 24–66 are Cytoplasmic-facing; the sequence is NTSMCTISISGASVEISGCDNPALFEILPNLKPFDHGLSVPSI.

This sequence belongs to the Tymovirales TGBp3 protein family.

The protein localises to the host endoplasmic reticulum membrane. Plays a role in viral cell-to-cell propagation, by facilitating genome transport to neighboring plant cells through plasmosdesmata. May induce the formation of granular vesicles derived from the Endoplasmic reticulum, which align on actin filaments. The sequence is that of Movement protein TGBp3 from Trifolium (WCMV).